A 960-amino-acid polypeptide reads, in one-letter code: Leucine-rich repeat receptor-like serine/threonine-protein kinase SKM1 (960 aa).

The first 29 residues, 1 to 29 (MSTSHHHHHPPYLITTLFFLFLNFSCLHA), serve as a signal peptide directing secretion. The Extracellular portion of the chain corresponds to 30 to 634 (NELELLLSFK…VRKRSTKSWW (605 aa)). Residues cysteine 61 and cysteine 68 are joined by a disulfide bond. N-linked (GlcNAc...) asparagine glycans are attached at residues asparagine 70, asparagine 83, asparagine 103, asparagine 108, asparagine 129, and asparagine 134. 22 LRR repeats span residues 71-96 (ISRV…TFRL), 97-120 (PFLQ…IFTT), 122-146 (SPSL…FLPN), 149-168 (TLDL…IGVF), 169-194 (SNLR…NLSR), 196-216 (EFLT…LGKM), 217-240 (KNLK…IGGL), 241-264 (SSLN…LGDL), 265-288 (KKLE…IFSL), 290-312 (NLIS…VAQM), 313-336 (QSLE…VTSL), 338-360 (RLKV…LGKH), 361-384 (NNLT…LCDS), 386-408 (HLTK…LGMC), 409-432 (QSLE…FTKL), 434-454 (LVNF…TWDM), 455-477 (PQLE…FSRS), 478-501 (KRLK…LMTF), 503-525 (EIMD…LSSC), 526-549 (KNLV…FAEF), 550-573 (QVLS…LGNI), and 575-598 (SLVQ…AFLA). A glycan (N-linked (GlcNAc...) asparagine) is linked at asparagine 191. The short motif at 221 to 226 (WIYLGY) is the CLE45 peptide binding element. 2 N-linked (GlcNAc...) asparagine glycosylation sites follow: asparagine 228 and asparagine 252. Asparagine 324 carries N-linked (GlcNAc...) asparagine glycosylation. Residues asparagine 362 and asparagine 372 are each glycosylated (N-linked (GlcNAc...) asparagine). Asparagine 537 carries an N-linked (GlcNAc...) asparagine glycan. N-linked (GlcNAc...) asparagine glycosylation is found at asparagine 580 and asparagine 600. A helical membrane pass occupies residues 635–655 (LIITSTFAAFLAVLVSGFFIV). The Cytoplasmic segment spans residues 656–960 (LVFQRTHNVL…TYLSKILSLA (305 aa)). Positions 691 to 953 (FTVNTILSSL…SSSSSCTTYL (263 aa)) constitute a Protein kinase domain. Threonine 692 carries the phosphothreonine modification. ATP is bound by residues 697–705 (LSSLKDQNV) and lysine 717. The residue at position 834 (tyrosine 834) is a Phosphotyrosine.

Belongs to the protein kinase superfamily. Ser/Thr protein kinase family. As to quaternary structure, self-interacts. Binds to CLE45 present in the pistil, particularly under relatively high temperature (at 30 degrees Celsius). In terms of tissue distribution, expressed in pollen grains and roots vascular tissues. Present in roots.

The protein resides in the cell membrane. It carries out the reaction L-seryl-[protein] + ATP = O-phospho-L-seryl-[protein] + ADP + H(+). The enzyme catalyses L-threonyl-[protein] + ATP = O-phospho-L-threonyl-[protein] + ADP + H(+). Functionally, receptor with a serine/threonine-protein kinase activity. Together with SKM2, LRR-rich receptor-like kinase (LRR-RLK) required for male fertility by the perception of CLE43 and CLE45 peptides and the transduction of their promoting action in pollen tubes, especially under relatively high temperature (at 30 degrees Celsius), thus conferring tolerance against high temperature probably through the maintenance of mitochondrial activity. Seems to not be involved in the perception of CLE45 peptide in roots. In Arabidopsis thaliana (Mouse-ear cress), this protein is Leucine-rich repeat receptor-like serine/threonine-protein kinase SKM1.